The chain runs to 1388 residues: DNA-directed RNA polymerase subunit beta'' (1388 aa).

Zn(2+) contacts are provided by Cys224, Cys294, Cys301, and Cys304.

This sequence belongs to the RNA polymerase beta' chain family. RpoC2 subfamily. In terms of assembly, in plastids the minimal PEP RNA polymerase catalytic core is composed of four subunits: alpha, beta, beta', and beta''. When a (nuclear-encoded) sigma factor is associated with the core the holoenzyme is formed, which can initiate transcription. The cofactor is Zn(2+).

The protein localises to the plastid. The protein resides in the chloroplast. It catalyses the reaction RNA(n) + a ribonucleoside 5'-triphosphate = RNA(n+1) + diphosphate. DNA-dependent RNA polymerase catalyzes the transcription of DNA into RNA using the four ribonucleoside triphosphates as substrates. The chain is DNA-directed RNA polymerase subunit beta'' from Phalaenopsis aphrodite subsp. formosana (Moth orchid).